The following is a 166-amino-acid chain: Thioredoxin, mitochondrial (166 aa).

The N-terminal 59 residues, 1 to 59 (MAQRLLLRRFLTSVISRKPPQGVWASLTSTSLQTPPYNAGGLTGTPSPARTFHTTRVCS), are a transit peptide targeting the mitochondrion. The Thioredoxin domain occupies 61 to 166 (TFNVQDGPDF…LEAFLKKLIG (106 aa)). Catalysis depends on nucleophile residues C90 and C93. C90 and C93 are oxidised to a cystine. Residue K152 is modified to N6-acetyllysine; alternate. K152 carries the N6-succinyllysine; alternate modification.

Belongs to the thioredoxin family. In terms of assembly, monomer. In terms of tissue distribution, expressed in several tissues with the highest expression levels in heart, muscle, kidney and adrenal gland.

The protein localises to the mitochondrion. In terms of biological role, important for the control of mitochondrial reactive oxygen species homeostasis, apoptosis regulation and cell viability. Is involved in various redox reactions including the reduction of protein disulfide bonds, through the reversible oxidation of its active center dithiol to a disulfide. This Rattus norvegicus (Rat) protein is Thioredoxin, mitochondrial (Txn2).